A 624-amino-acid polypeptide reads, in one-letter code: PTS system mannitol-specific EIICBA component (624 aa).

A PTS EIIC type-2 domain is found at F13 to K336. Helical transmembrane passes span I25–N46, K51–K71, S135–K156, V166–K186, V274–V293, and V314–L335. The region spanning Q372–V463 is the PTS EIIB type-2 domain. The active-site Phosphocysteine intermediate; for EIIB activity is the C378. Phosphocysteine; by EIIA is present on C378. The PTS EIIA type-2 domain maps to F482 to A624. H542 acts as the Tele-phosphohistidine intermediate; for EIIA activity in catalysis. H542 carries the phosphohistidine; by HPr modification.

As to quaternary structure, homodimer. An intramolecular phosphotransfer takes places between His-542 and Cys-378.

The protein resides in the cell inner membrane. It carries out the reaction D-mannitol(out) + N(pros)-phospho-L-histidyl-[protein] = D-mannitol 1-phosphate(in) + L-histidyl-[protein]. In terms of biological role, the phosphoenolpyruvate-dependent sugar phosphotransferase system (sugar PTS), a major carbohydrate active transport system, catalyzes the phosphorylation of incoming sugar substrates concomitantly with their translocation across the cell membrane. This system is involved in D-mannitol transport. The protein is PTS system mannitol-specific EIICBA component (mtlA) of Pasteurella multocida (strain Pm70).